Here is a 145-residue protein sequence, read N- to C-terminus: Catabolic 3-dehydroquinase (145 aa).

Residue Tyr24 is the Proton acceptor of the active site. Substrate-binding residues include Asn77, His83, and Asp90. His103 serves as the catalytic Proton donor. Residues 104–105 (IT) and Arg114 contribute to the substrate site.

It belongs to the type-II 3-dehydroquinase family. As to quaternary structure, homododecamer. Adopts a ring-like structure, composed of an arrangement of two hexameric rings stacked on top of one another.

The catalysed reaction is 3-dehydroquinate = 3-dehydroshikimate + H2O. It participates in aromatic compound metabolism; 3,4-dihydroxybenzoate biosynthesis; 3,4-dihydroxybenzoate from 3-dehydroquinate: step 1/2. In terms of biological role, is involved in the catabolism of quinate. Allows the utilization of quinate as carbon source via the beta-ketoadipate pathway. The polypeptide is Catabolic 3-dehydroquinase (Clavispora lusitaniae (strain ATCC 42720) (Yeast)).